A 351-amino-acid chain; its full sequence is Protein Wnt-4 (351 aa).

The signal sequence occupies residues 1–22 (MSPEYFLRSLLLIILATFSANA). N-linked (GlcNAc...) asparagine glycans are attached at residues N21 and N88. Cystine bridges form between C78/C89, C128/C136, C138/C155, C206/C220, C208/C215, C280/C311, C296/C306, C310/C350, C326/C341, C328/C338, and C333/C334. S212 carries O-palmitoleoyl serine; by PORCN lipidation. A glycan (N-linked (GlcNAc...) asparagine) is linked at N297.

Belongs to the Wnt family. In terms of assembly, interacts with CPZ. Palmitoleoylation is required for efficient binding to frizzled receptors. Depalmitoleoylation leads to Wnt signaling pathway inhibition. In terms of tissue distribution, predominantly expressed in the diencephalon neuromere D2.

The protein localises to the secreted. It localises to the extracellular space. Its subcellular location is the extracellular matrix. In terms of biological role, ligand for members of the frizzled family of seven transmembrane receptors. Plays an important role in embryonic development. This is Protein Wnt-4 (WNT4) from Gallus gallus (Chicken).